We begin with the raw amino-acid sequence, 614 residues long: Probable ATP-dependent RNA helicase DDX5 (614 aa).

Basic and acidic residues predominate over residues 1–15; it reads MSGYSSDRDRGRDRG. The interval 1 to 39 is disordered; that stretch reads MSGYSSDRDRGRDRGFGAPRFGGSRAGPLSGKKFGNPGE. Position 24 is a phosphoserine (Ser-24). Lys-32 carries the post-translational modification N6-acetyllysine; alternate. Residue Lys-32 forms a Glycyl lysine isopeptide (Lys-Gly) (interchain with G-Cter in SUMO2); alternate linkage. Lys-33 and Lys-40 each carry N6-acetyllysine. A Glycyl lysine isopeptide (Lys-Gly) (interchain with G-Cter in SUMO2) cross-link involves residue Lys-45. Lys-53 participates in a covalent cross-link: Glycyl lysine isopeptide (Lys-Gly) (interchain with G-Cter in SUMO2); alternate. Lys-53 is covalently cross-linked (Glycyl lysine isopeptide (Lys-Gly) (interchain with G-Cter in SUMO); alternate). Residue Lys-53 forms a Glycyl lysine isopeptide (Lys-Gly) (interchain with G-Cter in SUMO1); alternate linkage. Positions 94–122 match the Q motif motif; it reads LNFYEANFPANVMDVIARQNFTEPTAIQA. Residues 114-116, Gln-121, and 138-145 each bind ATP; these read FTE and AQTGSGKT. Positions 125–300 constitute a Helicase ATP-binding domain; the sequence is WPVALSGLDM…EDFLKDYIHI (176 aa). Lys-236 is modified (N6-acetyllysine). The DEAD box signature appears at 248–251; that stretch reads DEAD. The residue at position 297 (Tyr-297) is a Phosphotyrosine. The Helicase C-terminal domain maps to 328–475; the sequence is KLIRLMEEIM…AINPKLLQLV (148 aa). Residues Lys-340, Lys-343, Lys-388, Lys-391, Lys-411, Lys-437, Lys-451, and Lys-470 each participate in a glycyl lysine isopeptide (Lys-Gly) (interchain with G-Cter in SUMO2) cross-link. The tract at residues 477–504 is disordered; that stretch reads DRGSGRSRGRGGMKDDRRDRYSAGKRGG. A transactivation domain region spans residues 477-614; sequence DRGSGRSRGR…GYPMPTGYSQ (138 aa). Ser-480 carries the post-translational modification Phosphoserine. The span at 488 to 498 shows a compositional bias: basic and acidic residues; it reads GMKDDRRDRYS. Ser-520 is modified (phosphoserine). Lys-523 is covalently cross-linked (Glycyl lysine isopeptide (Lys-Gly) (interchain with G-Cter in SUMO2)).

The protein belongs to the DEAD box helicase family. DDX5/DBP2 subfamily. Identified in the spliceosome C complex. Component of a ribonucleoprotein complex containing mRNAs and RNA-binding proteins including DDX5, HNRNPH2 and SRSF1 as well as splicing regulator ARVCF. Interacts with RBM4; the interaction occurs in an RNA-independent manner. Interacts with AGO1 and AGO2. Interacts with ESR1, AR, EP300, CREBBP, POLR2A, TP53, RUNX2 and HDAC1. Self-associates. Interacts with DDX17. Interacts with BRDT. The large PER complex involved in the repression of transcriptional termination is composed of at least PER2, CDK9, DDX5, DHX9, NCBP1 and POLR2A (active). Interacts with DHX36; this interaction occurs in a RNA-dependent manner. Interacts with NUPR1. Interacts with ERCC6. Interacts with DDX3X in the cytoplasm; this interaction may be more efficient when both proteins are unphosphorylated. In terms of processing, arg-502 is dimethylated, probably to asymmetric dimethylarginine. Sumoylated; sumoylation, promoted by PIAS1, promotes interaction with HDAC1 and transcriptional repression activity. Sumoylation also significantly increases stability, and reduces polyubiquitination. Post-translationally, polyubiquitinated, leading to proteasomal degradation. In terms of processing, weakly phosphorylated in the G1/S phase of the cell cycle and much more at G2/M, especially at Thr and Tyr residues.

The protein localises to the nucleus. It is found in the nucleolus. Its subcellular location is the nucleus speckle. The protein resides in the cytoplasm. The enzyme catalyses ATP + H2O = ADP + phosphate + H(+). Functionally, involved in the alternative regulation of pre-mRNA splicing; its RNA helicase activity is necessary for increasing tau exon 10 inclusion and occurs in a RBM4-dependent manner. Binds to the tau pre-mRNA in the stem-loop region downstream of exon 10. The rate of ATP hydrolysis is highly stimulated by single-stranded RNA. Involved in transcriptional regulation; the function is independent of the RNA helicase activity. Transcriptional coactivator for androgen receptor AR but probably not ESR1. Synergizes with DDX17 and SRA1 RNA to activate MYOD1 transcriptional activity and involved in skeletal muscle differentiation. Transcriptional coactivator for p53/TP53 and involved in p53/TP53 transcriptional response to DNA damage and p53/TP53-dependent apoptosis. Transcriptional coactivator for RUNX2 and involved in regulation of osteoblast differentiation. Acts as a transcriptional repressor in a promoter-specific manner; the function probably involves association with histone deacetylases, such as HDAC1. As component of a large PER complex is involved in the inhibition of 3' transcriptional termination of circadian target genes such as PER1 and NR1D1 and the control of the circadian rhythms. The chain is Probable ATP-dependent RNA helicase DDX5 (DDX5) from Homo sapiens (Human).